The sequence spans 290 residues: Putative tyrosine recombinase TTE1313 (290 aa).

A Core-binding (CB) domain is found at 1–85 (MAESVVGEFL…SIKAFYHYLF (85 aa)). Residues 106–290 (KEPVTLTVEQ…EVYNKFHPRA (185 aa)) enclose the Tyr recombinase domain. The active site involves Arg239. Catalysis depends on Tyr283, which acts as the O-(3'-phospho-DNA)-tyrosine intermediate.

This sequence belongs to the 'phage' integrase family.

It localises to the cytoplasm. Functionally, site-specific tyrosine recombinase, which acts by catalyzing the cutting and rejoining of the recombining DNA molecules. This chain is Putative tyrosine recombinase TTE1313, found in Caldanaerobacter subterraneus subsp. tengcongensis (strain DSM 15242 / JCM 11007 / NBRC 100824 / MB4) (Thermoanaerobacter tengcongensis).